A 197-amino-acid polypeptide reads, in one-letter code: GCN5-related N-acetyltransferase 1, chloroplastic (197 aa).

A chloroplast-targeting transit peptide spans 1-37 (MFLGGTISTPPASLRLRSTLNPQNAVTQSSSQATFPA). A compositionally biased stretch (polar residues) spans 23–34 (QNAVTQSSSQAT). Residues 23-46 (QNAVTQSSSQATFPAAMQRKPPSY) are disordered. One can recognise an N-acetyltransferase domain in the interval 58–195 (FLLRRTTEGL…GMVFIRKQRN (138 aa)). Residues 129-131 (VVV), 137-142 (SCGLGK), 165-167 (EPR), and Tyr-172 each bind acetyl-CoA. Tyr-172 functions as the Proton donor in the catalytic mechanism.

The protein belongs to the acetyltransferase family. GNAT subfamily. As to quaternary structure, oligomer. Post-translationally, autoacetylated. Expressed in green tissues. Accumulates mainly in flowers and young leaves, and, to a lower extent, in stems and mature leaves, but barely in roots.

It is found in the plastid. The protein resides in the chloroplast. The enzyme catalyses an N-terminal L-alpha-aminoacyl-[protein] + acetyl-CoA = N-terminal N(alpha)-acetyl-L-alpha-aminoacyl-[protein] + CoA + H(+). It carries out the reaction L-lysyl-[protein] + acetyl-CoA = N(6)-acetyl-L-lysyl-[protein] + CoA + H(+). The catalysed reaction is 5-methoxytryptamine + acetyl-CoA = melatonin + CoA + H(+). It catalyses the reaction serotonin + acetyl-CoA = N-acetylserotonin + CoA + H(+). With respect to regulation, inhibited by 5-methoxytryptamine in vitro. In terms of biological role, protein acetyltransferase with dual specificity triggering both N-alpha-acetylation (NTA) and epsilon-lysine acetylation (KA), possibly with a low efficiency or toward specific plastid substrates. Involved in melatonin biosynthesis by catalyzing the formation of N-acetylserotonin (NAS) from serotonin and of melatonin (N-acetyl-5-methoxytryptamine) from 5-methoxytryptamine (5-MT). The polypeptide is GCN5-related N-acetyltransferase 1, chloroplastic (Arabidopsis thaliana (Mouse-ear cress)).